The chain runs to 204 residues: uncharacterized protein (204 aa).

Residues 1–20 (MQNPLPEVMSPEHDKRTTTP) form a disordered region.

This is an uncharacterized protein from Frog virus 3 (isolate Goorha) (FV-3).